A 273-amino-acid chain; its full sequence is 2,3,4,5-tetrahydropyridine-2,6-dicarboxylate N-succinyltransferase (273 aa).

Arg-104 and Asp-141 together coordinate substrate.

Belongs to the transferase hexapeptide repeat family. Homotrimer.

The protein localises to the cytoplasm. The catalysed reaction is (S)-2,3,4,5-tetrahydrodipicolinate + succinyl-CoA + H2O = (S)-2-succinylamino-6-oxoheptanedioate + CoA. The protein operates within amino-acid biosynthesis; L-lysine biosynthesis via DAP pathway; LL-2,6-diaminopimelate from (S)-tetrahydrodipicolinate (succinylase route): step 1/3. The protein is 2,3,4,5-tetrahydropyridine-2,6-dicarboxylate N-succinyltransferase of Aromatoleum aromaticum (strain DSM 19018 / LMG 30748 / EbN1) (Azoarcus sp. (strain EbN1)).